A 639-amino-acid polypeptide reads, in one-letter code: 3D-(3,5/4)-trihydroxycyclohexane-1,2-dione hydrolase (639 aa).

A thiamine diphosphate-binding site is contributed by glutamate 62. A thiamine pyrophosphate binding region spans residues 438–518 (SLPGDLQRMW…INILLFDNCG (81 aa)). Positions 489 and 516 each coordinate Mg(2+).

The protein belongs to the TPP enzyme family. Mg(2+) is required as a cofactor. It depends on thiamine diphosphate as a cofactor.

It carries out the reaction 3D-3,5/4-trihydroxycyclohexane-1,2-dione + H2O = 5-deoxy-D-glucuronate + H(+). Its pathway is polyol metabolism; myo-inositol degradation into acetyl-CoA; acetyl-CoA from myo-inositol: step 3/7. Its function is as follows. Involved in the cleavage of the C1-C2 bond of 3D-(3,5/4)-trihydroxycyclohexane-1,2-dione (THcHDO) to yield 5-deoxy-glucuronate (5DG). The chain is 3D-(3,5/4)-trihydroxycyclohexane-1,2-dione hydrolase from Clostridium perfringens (strain ATCC 13124 / DSM 756 / JCM 1290 / NCIMB 6125 / NCTC 8237 / Type A).